A 471-amino-acid polypeptide reads, in one-letter code: MVFYRSVSLLSKLRSRAVQQSNVSNSVRWLQVQTSSGLDLRSELVQELIPEQQDRLKKIKSDMKGSIGNITVDMVLGGMRGMTGLLWKPHYLDPDEGIRFRGLSIPECQKVLPAAKPGGEPLPEGLLWLLLTGKVPSKEQVNSIVSGIAESGIISLIIMYTTIDALPVTAHPMTQFATGVMALQVQSEFQKAYEKGIHKSKYWEPTYEDSMNLIAQVPLVAAYVYRRMYKNGDTIPKDESLDYGANFAHMLGFSSSEMHELLMRLYVTIHSDHEGGNVSAHTGHLVASALSDPYLSFAAALNGLAGPLHGLANQEVLLWIKSVVEECGENISKEQLKDYVWKTLNSGKVVPGFGHGVLRKTVPRYTCQREFAMKHLPEDPLFQLVSKLYEVFLLFLQNLAKLKPWPNVDAHSGVLLNYYGLTEARYYTVLFGVSRALGICSQLIWDRALGLPLERPKSVTMEWLENQCKKA.

Active-site residues include H309, H355, and D409.

The protein belongs to the citrate synthase family. In terms of assembly, homodimer. As to expression, ubiquitous.

It localises to the mitochondrion matrix. It catalyses the reaction oxaloacetate + acetyl-CoA + H2O = citrate + CoA + H(+). Its pathway is carbohydrate metabolism; tricarboxylic acid cycle; isocitrate from oxaloacetate: step 1/2. The sequence is that of Citrate synthase, mitochondrial from Solanum tuberosum (Potato).